A 314-amino-acid chain; its full sequence is Leucine-rich repeat-containing protein 59 (314 aa).

Residues methionine 1–serine 247 lie on the Cytoplasmic side of the membrane. LRR repeat units lie at residues aspartate 14–alanine 35, lysine 38–threonine 60, histidine 61–leucine 82, asparagine 84–lysine 106, and serine 107–alanine 126. A coiled-coil region spans residues methionine 146 to lysine 216. 2 disordered regions span residues arginine 165–lysine 197 and glutamate 212–serine 237. The segment covering lysine 215–alanine 225 has biased composition (basic residues). A helical membrane pass occupies residues leucine 248–valine 268. Topologically, residues alanine 269–threonine 314 are lumenal.

As to quaternary structure, interacts with SGO1.

Its subcellular location is the microsome membrane. The protein localises to the endoplasmic reticulum membrane. It is found in the nucleus envelope. In terms of biological role, required for nuclear import of FGF1. The protein is Leucine-rich repeat-containing protein 59 (lrrc59) of Danio rerio (Zebrafish).